Consider the following 363-residue polypeptide: Phosphatidylinositol transfer protein sfh-5 (363 aa).

Positions 1 to 84 are disordered; it reads MSTQPSDSAE…SPADIKDSVS (84 aa). Basic and acidic residues predominate over residues 36-46; sequence DAAKHAEEEPK. Positions 64–76 are enriched in low complexity; that stretch reads KPAAAPAQEADSP. The region spanning 180–354 is the CRAL-TRIO domain; that stretch reads AGDEPAVDEP…EYGGKGADLK (175 aa). Positions 200, 220, 253, 255, and 289 each coordinate heme.

Belongs to the SFH5 family. Heme b is required as a cofactor.

It is found in the cytoplasm. The protein resides in the endoplasmic reticulum membrane. The protein localises to the microsome membrane. It catalyses the reaction a 1,2-diacyl-sn-glycero-3-phospho-(1D-myo-inositol)(in) = a 1,2-diacyl-sn-glycero-3-phospho-(1D-myo-inositol)(out). Non-classical phosphatidylinositol (PtdIns) transfer protein (PITP), which exhibits PtdIns-binding/transfer activity in the absence of detectable PtdCho-binding/transfer activity. Regulates PtdIns(4,5)P2 homeostasis at the plasma membrane. Heme-binding protein that may play a role in organic oxidant-induced stress responses. This is Phosphatidylinositol transfer protein sfh-5 (sfh-5) from Neurospora crassa (strain ATCC 24698 / 74-OR23-1A / CBS 708.71 / DSM 1257 / FGSC 987).